The primary structure comprises 212 residues: tRNA(Phe) 7-((3-amino-3-carboxypropyl)-4-demethylwyosine(37)-N(4))-methyltransferase 2 (212 aa).

It belongs to the TYW3 family.

The enzyme catalyses 4-demethyl-7-[(3S)-3-amino-3-carboxypropyl]wyosine(37) in tRNA(Phe) + S-adenosyl-L-methionine = 7-[(3S)-3-amino-3-carboxypropyl]wyosine(37) in tRNA(Phe) + S-adenosyl-L-homocysteine + H(+). Functionally, S-adenosyl-L-methionine-dependent methyltransferase that acts as a component of the wyosine derivatives biosynthesis pathway. Probably methylates N-4 position of wybutosine-86 to produce wybutosine-72. The protein is tRNA(Phe) 7-((3-amino-3-carboxypropyl)-4-demethylwyosine(37)-N(4))-methyltransferase 2 of Thermococcus kodakarensis (strain ATCC BAA-918 / JCM 12380 / KOD1) (Pyrococcus kodakaraensis (strain KOD1)).